The sequence spans 469 residues: ATP synthase subunit beta (469 aa).

Position 155–162 (155–162) interacts with ATP; that stretch reads GGAGVGKT.

This sequence belongs to the ATPase alpha/beta chains family. In terms of assembly, F-type ATPases have 2 components, CF(1) - the catalytic core - and CF(0) - the membrane proton channel. CF(1) has five subunits: alpha(3), beta(3), gamma(1), delta(1), epsilon(1). CF(0) has three main subunits: a(1), b(2) and c(9-12). The alpha and beta chains form an alternating ring which encloses part of the gamma chain. CF(1) is attached to CF(0) by a central stalk formed by the gamma and epsilon chains, while a peripheral stalk is formed by the delta and b chains.

Its subcellular location is the cell inner membrane. The catalysed reaction is ATP + H2O + 4 H(+)(in) = ADP + phosphate + 5 H(+)(out). In terms of biological role, produces ATP from ADP in the presence of a proton gradient across the membrane. The catalytic sites are hosted primarily by the beta subunits. The sequence is that of ATP synthase subunit beta from Thermosipho melanesiensis (strain DSM 12029 / CIP 104789 / BI429).